The sequence spans 322 residues: Cytochrome f (322 aa).

Positions 1-35 (MQNRNIFSWVKEQTTRSISVSIMILIYVITWTSIS) are cleaved as a signal peptide. The heme site is built by Y38, C58, C61, and H62. A helical membrane pass occupies residues 288–308 (VQGLFFFFASVILAQIFLVLK).

This sequence belongs to the cytochrome f family. As to quaternary structure, the 4 large subunits of the cytochrome b6-f complex are cytochrome b6, subunit IV (17 kDa polypeptide, petD), cytochrome f and the Rieske protein, while the 4 small subunits are PetG, PetL, PetM and PetN. The complex functions as a dimer. Heme serves as cofactor.

The protein resides in the plastid. Its subcellular location is the chloroplast thylakoid membrane. Its function is as follows. Component of the cytochrome b6-f complex, which mediates electron transfer between photosystem II (PSII) and photosystem I (PSI), cyclic electron flow around PSI, and state transitions. The protein is Cytochrome f of Nandina domestica (Heavenly bamboo).